Reading from the N-terminus, the 180-residue chain is Hypoxanthine-guanine phosphoribosyltransferase (180 aa).

The diphosphate site is built by Lys-43 and Gly-44. Residues Glu-99 and Asp-100 each contribute to the Mg(2+) site. The active-site Proton acceptor is Asp-103. Residues Lys-131, 152–153, and Asp-159 contribute to the GMP site; that span reads FI. Arg-165 lines the diphosphate pocket.

It belongs to the purine/pyrimidine phosphoribosyltransferase family. The cofactor is Mg(2+).

The protein resides in the cytoplasm. The enzyme catalyses IMP + diphosphate = hypoxanthine + 5-phospho-alpha-D-ribose 1-diphosphate. The catalysed reaction is GMP + diphosphate = guanine + 5-phospho-alpha-D-ribose 1-diphosphate. The protein operates within purine metabolism; IMP biosynthesis via salvage pathway; IMP from hypoxanthine: step 1/1. Its pathway is purine metabolism; GMP biosynthesis via salvage pathway; GMP from guanine: step 1/1. Functionally, purine salvage pathway enzyme that catalyzes the transfer of the ribosyl-5-phosphate group from 5-phospho-alpha-D-ribose 1-diphosphate (PRPP) to the N9 position of the 6-oxopurines hypoxanthine and guanine to form the corresponding ribonucleotides IMP (inosine 5'-monophosphate) and GMP (guanosine 5'-monophosphate), with the release of PPi. The protein is Hypoxanthine-guanine phosphoribosyltransferase (hpt) of Streptococcus thermophilus (strain CNRZ 1066).